Consider the following 203-residue polypeptide: NADH-quinone oxidoreductase subunit C (203 aa).

Belongs to the complex I 30 kDa subunit family. As to quaternary structure, NDH-1 is composed of 14 different subunits. Subunits NuoB, C, D, E, F, and G constitute the peripheral sector of the complex.

The protein resides in the cell inner membrane. It catalyses the reaction a quinone + NADH + 5 H(+)(in) = a quinol + NAD(+) + 4 H(+)(out). NDH-1 shuttles electrons from NADH, via FMN and iron-sulfur (Fe-S) centers, to quinones in the respiratory chain. The immediate electron acceptor for the enzyme in this species is believed to be ubiquinone. Couples the redox reaction to proton translocation (for every two electrons transferred, four hydrogen ions are translocated across the cytoplasmic membrane), and thus conserves the redox energy in a proton gradient. The polypeptide is NADH-quinone oxidoreductase subunit C (Verminephrobacter eiseniae (strain EF01-2)).